Reading from the N-terminus, the 403-residue chain is Phosphomevalonate dehydratase large subunit (403 aa).

(R)-5-phosphomevalonate-binding residues include Gly-48, Val-49, Ser-50, Asn-79, and Pro-80. Cys-119 provides a ligand contact to [4Fe-4S] cluster. The (R)-5-phosphomevalonate site is built by Glu-138 and Ser-139. The [4Fe-4S] cluster site is built by Cys-301 and Cys-358. Lys-378 is a (R)-5-phosphomevalonate binding site.

This sequence belongs to the AcnX type II large subunit family. As to quaternary structure, heterodimer composed of a large subunit (PMDh-L) and a small subunit (PMDh-S). [4Fe-4S] cluster is required as a cofactor.

It carries out the reaction (R)-5-phosphomevalonate = (2E)-3-methyl-5-phosphooxypent-2-enoate + H2O. The protein operates within isoprenoid biosynthesis; isopentenyl diphosphate biosynthesis via mevalonate pathway. Functionally, component of a hydro-lyase that catalyzes the dehydration of mevalonate 5-phosphate (MVA5P) to form trans-anhydromevalonate 5-phosphate (tAHMP). Involved in the archaeal mevalonate (MVA) pathway, which provides fundamental precursors for isoprenoid biosynthesis, such as isopentenyl diphosphate (IPP) and dimethylallyl diphosphate (DMAPP). This Methanocaldococcus jannaschii (strain ATCC 43067 / DSM 2661 / JAL-1 / JCM 10045 / NBRC 100440) (Methanococcus jannaschii) protein is Phosphomevalonate dehydratase large subunit.